A 635-amino-acid chain; its full sequence is Threonine--tRNA ligase (635 aa).

The 61-residue stretch at 1–61 (MVSIRLPDGS…DRDAALAIIT (61 aa)) folds into the TGS domain. Residues 242–533 (DHRKLGKQLD…LIEHHAGAMP (292 aa)) are catalytic. Zn(2+) is bound by residues Cys333, His384, and His510.

This sequence belongs to the class-II aminoacyl-tRNA synthetase family. As to quaternary structure, homodimer. Zn(2+) is required as a cofactor.

Its subcellular location is the cytoplasm. The catalysed reaction is tRNA(Thr) + L-threonine + ATP = L-threonyl-tRNA(Thr) + AMP + diphosphate + H(+). Catalyzes the attachment of threonine to tRNA(Thr) in a two-step reaction: L-threonine is first activated by ATP to form Thr-AMP and then transferred to the acceptor end of tRNA(Thr). Also edits incorrectly charged L-seryl-tRNA(Thr). The sequence is that of Threonine--tRNA ligase from Burkholderia ambifaria (strain ATCC BAA-244 / DSM 16087 / CCUG 44356 / LMG 19182 / AMMD) (Burkholderia cepacia (strain AMMD)).